Here is a 1057-residue protein sequence, read N- to C-terminus: Histone deacetylase complex subunit SAP130 (1057 aa).

Disordered stretches follow at residues 1 to 68 (MSSQ…EEKQ), 289 to 314 (TLSR…PAQP), 556 to 594 (GIQP…DTKT), 624 to 692 (QTHS…KPKP), and 827 to 880 (NLSM…VKAE). Residues 41–54 (ESVRDPEVAPRDQH) are compositionally biased toward basic and acidic residues. A compositionally biased stretch (polar residues) spans 289–301 (TLSRPTLSIQQHP). Composition is skewed to low complexity over residues 579 to 590 (QPAPISAQQPQA) and 624 to 642 (QTHS…PRPS). Over residues 671 to 682 (RVENTMRSTSGS) the composition is skewed to polar residues.

The protein belongs to the SAP130 family. In terms of assembly, component of a mSin3A corepressor complex that contains SIN3A, SAP130, SUDS3/SAP45, ARID4B/SAP180, HDAC1 and HDAC2.

The protein localises to the nucleus. Its function is as follows. Acts as a transcriptional repressor. May function in the assembly and/or enzymatic activity of the mSin3A corepressor complex or in mediating interactions between the complex and other regulatory complexes. The chain is Histone deacetylase complex subunit SAP130 (SAP130) from Gallus gallus (Chicken).